The sequence spans 179 residues: Large ribosomal subunit protein uL6 (179 aa).

Belongs to the universal ribosomal protein uL6 family. In terms of assembly, part of the 50S ribosomal subunit.

This protein binds to the 23S rRNA, and is important in its secondary structure. It is located near the subunit interface in the base of the L7/L12 stalk, and near the tRNA binding site of the peptidyltransferase center. The sequence is that of Large ribosomal subunit protein uL6 from Bifidobacterium longum (strain DJO10A).